We begin with the raw amino-acid sequence, 379 residues long: 3-isopropylmalate dehydrogenase 1 (379 aa).

The substrate site is built by arginine 101, arginine 111, arginine 139, and aspartate 230. 3 residues coordinate Mg(2+): aspartate 230, aspartate 254, and aspartate 258. 293–305 (GSAPDIAGKGIAN) provides a ligand contact to NAD(+).

It belongs to the isocitrate and isopropylmalate dehydrogenases family. LeuB type 1 subfamily. In terms of assembly, homodimer. Requires Mg(2+) as cofactor. It depends on Mn(2+) as a cofactor.

The protein resides in the cytoplasm. It carries out the reaction (2R,3S)-3-isopropylmalate + NAD(+) = 4-methyl-2-oxopentanoate + CO2 + NADH. It functions in the pathway amino-acid biosynthesis; L-leucine biosynthesis; L-leucine from 3-methyl-2-oxobutanoate: step 3/4. Its function is as follows. Catalyzes the oxidation of 3-carboxy-2-hydroxy-4-methylpentanoate (3-isopropylmalate) to 3-carboxy-4-methyl-2-oxopentanoate. The product decarboxylates to 4-methyl-2 oxopentanoate. This Bradyrhizobium diazoefficiens (strain JCM 10833 / BCRC 13528 / IAM 13628 / NBRC 14792 / USDA 110) protein is 3-isopropylmalate dehydrogenase 1.